Consider the following 359-residue polypeptide: sn-1 linoleoyl-lipid 6-desaturase (359 aa).

Transmembrane regions (helical) follow at residues 45 to 65 (LIIV…PVIF) and 69 to 89 (LLGC…VGHD). The Histidine box-1 motif lies at 88 to 92 (HDANH). Residues 123–128 (HNYLHH) carry the Histidine box-2 motif. A run of 3 helical transmembrane segments spans residues 165–185 (IWGL…YLVL), 206–226 (LLGI…ALGF), and 231–251 (VLIG…TIFM). Residues 306-310 (HHLFP) carry the Histidine box-3 motif.

Belongs to the fatty acid desaturase type 2 family. Fe(2+) serves as cofactor.

The protein localises to the membrane. It carries out the reaction a 1-[(9Z,12Z)-octadecdienoyl]-2-acyl-glycerolipid + 2 reduced [2Fe-2S]-[ferredoxin] + O2 + 2 H(+) = a 1-[(6Z,9Z,12Z)-octadectrienoyl]-2-acyl-glycerolipid + 2 oxidized [2Fe-2S]-[ferredoxin] + 2 H2O. Its pathway is lipid metabolism; polyunsaturated fatty acid biosynthesis. Its function is as follows. Desaturase involved in fatty acid biosynthesis. Introduces a double bond at carbon 6 of linoleoyl group (18:2) attached to the sn-1 position of the glycerol moiety of membrane glycerolipids, leading to the formation of gamma-linolenic acid (GLA). The protein is sn-1 linoleoyl-lipid 6-desaturase of Synechocystis sp. (strain ATCC 27184 / PCC 6803 / Kazusa).